The following is a 148-amino-acid chain: Cytochrome c oxidase subunit 6, mitochondrial (148 aa).

The N-terminal 40 residues, Met1–Tyr40, are a transit peptide targeting the mitochondrion.

The protein belongs to the cytochrome c oxidase subunit 5A family. Component of the cytochrome c oxidase (complex IV, CIV), a multisubunit enzyme composed of 12 subunits. The complex is composed of a catalytic core of 3 subunits COX1, COX2 and COX3, encoded in the mitochondrial DNA, and 9 supernumerary subunits COX4, COX5A (or COX5B), COX6, COX7, COX8, COX9, COX12, COX13 and COX26, which are encoded in the nuclear genome. The complex exists as a monomer or a dimer and forms supercomplexes (SCs) in the inner mitochondrial membrane with a dimer of ubiquinol-cytochrome c oxidoreductase (cytochrome b-c1 complex, complex III, CIII), resulting in 2 different assemblies (supercomplexes III(2)IV and III(2)IV(2)). COX26 interacts with COX1, COX2, COX6 and COX9.

The protein resides in the mitochondrion inner membrane. Its pathway is energy metabolism; oxidative phosphorylation. Its function is as follows. Component of the cytochrome c oxidase, the last enzyme in the mitochondrial electron transport chain which drives oxidative phosphorylation. The respiratory chain contains 3 multisubunit complexes succinate dehydrogenase (complex II, CII), ubiquinol-cytochrome c oxidoreductase (cytochrome b-c1 complex, complex III, CIII) and cytochrome c oxidase (complex IV, CIV), that cooperate to transfer electrons derived from NADH and succinate to molecular oxygen, creating an electrochemical gradient over the inner membrane that drives transmembrane transport and the ATP synthase. Cytochrome c oxidase is the component of the respiratory chain that catalyzes the reduction of oxygen to water. Electrons originating from reduced cytochrome c in the intermembrane space (IMS) are transferred via the dinuclear copper A center (CU(A)) of COX2 and heme A of COX1 to the active site in COX1, a binuclear center (BNC) formed by heme A3 and copper B (CU(B)). The BNC reduces molecular oxygen to 2 water molecules using 4 electrons from cytochrome c in the IMS and 4 protons from the mitochondrial matrix. COX6 may stabilize the region of CIV at the interface with CIII, supporting a role in formation or stability of the CIII(2)IV(2) SC. The protein is Cytochrome c oxidase subunit 6, mitochondrial (COX6) of Saccharomyces cerevisiae (strain ATCC 204508 / S288c) (Baker's yeast).